We begin with the raw amino-acid sequence, 329 residues long: Succinylglutamate desuccinylase (329 aa).

Zn(2+) is bound by residues His53, Glu56, and His148. Glu211 is a catalytic residue.

It belongs to the AspA/AstE family. Succinylglutamate desuccinylase subfamily. The cofactor is Zn(2+).

The catalysed reaction is N-succinyl-L-glutamate + H2O = L-glutamate + succinate. It functions in the pathway amino-acid degradation; L-arginine degradation via AST pathway; L-glutamate and succinate from L-arginine: step 5/5. Functionally, transforms N(2)-succinylglutamate into succinate and glutamate. This chain is Succinylglutamate desuccinylase, found in Erwinia tasmaniensis (strain DSM 17950 / CFBP 7177 / CIP 109463 / NCPPB 4357 / Et1/99).